The primary structure comprises 166 residues: NADH-quinone oxidoreductase subunit I (166 aa).

4Fe-4S ferredoxin-type domains follow at residues 57–87 (LRRY…IESE) and 97–126 (TRYD…VTPI). Residues cysteine 67, cysteine 70, cysteine 73, cysteine 77, cysteine 106, cysteine 109, cysteine 112, and cysteine 116 each contribute to the [4Fe-4S] cluster site.

This sequence belongs to the complex I 23 kDa subunit family. In terms of assembly, NDH-1 is composed of 14 different subunits. Subunits NuoA, H, J, K, L, M, N constitute the membrane sector of the complex. [4Fe-4S] cluster serves as cofactor.

It localises to the cell inner membrane. The enzyme catalyses a quinone + NADH + 5 H(+)(in) = a quinol + NAD(+) + 4 H(+)(out). NDH-1 shuttles electrons from NADH, via FMN and iron-sulfur (Fe-S) centers, to quinones in the respiratory chain. The immediate electron acceptor for the enzyme in this species is believed to be ubiquinone. Couples the redox reaction to proton translocation (for every two electrons transferred, four hydrogen ions are translocated across the cytoplasmic membrane), and thus conserves the redox energy in a proton gradient. The protein is NADH-quinone oxidoreductase subunit I of Legionella pneumophila (strain Lens).